A 463-amino-acid polypeptide reads, in one-letter code: Nitrogenase vanadium-iron protein beta chain (463 aa).

[8Fe-7S] cluster-binding residues include C20, C45, C104, and S142.

The protein belongs to the NifD/NifK/NifE/NifN family. As to quaternary structure, hexamer of two alpha, two beta, and two delta chains. It depends on [8Fe-7S] cluster as a cofactor.

It carries out the reaction N2 + 8 reduced [2Fe-2S]-[ferredoxin] + 16 ATP + 16 H2O = H2 + 8 oxidized [2Fe-2S]-[ferredoxin] + 2 NH4(+) + 16 ADP + 16 phosphate + 6 H(+). Its function is as follows. This vanadium-iron protein is part of the nitrogenase complex that catalyzes the key enzymatic reactions in nitrogen fixation. This is Nitrogenase vanadium-iron protein beta chain (vnfK) from Trichormus variabilis (strain ATCC 29413 / PCC 7937) (Anabaena variabilis).